Reading from the N-terminus, the 509-residue chain is MFS transporter fsdG (509 aa).

Asn8 and Asn26 each carry an N-linked (GlcNAc...) asparagine glycan. 4 consecutive transmembrane segments (helical) span residues 63-83 (FLIH…ATTM), 103-123 (IALT…VTSP), 139-159 (IFFL…MFIA), and 162-182 (FLAG…IADF). An N-linked (GlcNAc...) asparagine glycan is attached at Asn189. Helical transmembrane passes span 195 to 215 (LFAL…GFVA), 222 to 242 (WTFR…CIFL), 298 to 318 (LIFL…FGLI), and 341 to 361 (GLSY…FNFI). Asn367 carries an N-linked (GlcNAc...) asparagine glycan. 4 helical membrane passes run 380–400 (YLPL…WYGW), 408–428 (WVVP…IIMP), 442–462 (AASV…FLPL), and 474–494 (GWGN…PAIF).

It belongs to the major facilitator superfamily.

It localises to the cell membrane. Efflux pump that might be required for efficient secretion of fusaridione A or other secondary metabolies produced by the fusaridione A gene cluster. In Fusarium heterosporum, this protein is MFS transporter fsdG.